A 342-amino-acid polypeptide reads, in one-letter code: Galactose mutarotase (342 aa).

An N-acetylalanine modification is found at A2. S14 bears the Phosphoserine mark. Beta-D-galactose is bound by residues 81-82 (NR) and H107. Position 124 is a phosphoserine (S124). H176 acts as the Proton donor in catalysis. Residues 176 to 178 (HSY), D243, Q279, and E307 each bind beta-D-galactose. E307 (proton acceptor) is an active-site residue.

The protein belongs to the aldose epimerase family. As to quaternary structure, monomer.

It is found in the cytoplasm. It carries out the reaction alpha-D-galactose = beta-D-galactose. It catalyses the reaction alpha-D-glucose = beta-D-glucose. It participates in carbohydrate metabolism; hexose metabolism. Its pathway is carbohydrate metabolism; galactose metabolism. Its function is as follows. Mutarotase that catalyzes the interconversion of beta-D-galactose and alpha-D-galactose during galactose metabolism. Beta-D-galactose is metabolized in the liver into glucose 1-phosphate, the primary metabolic fuel, by the action of four enzymes that constitute the Leloir pathway: GALM, GALK1 (galactokinase), GALT (galactose-1-phosphate uridylyltransferase) and GALE (UDP-galactose-4'-epimerase). Involved in the maintenance of the equilibrium between the beta- and alpha-anomers of galactose, therefore ensuring a sufficient supply of the alpha-anomer for GALK1. Also active on D-glucose although shows a preference for galactose over glucose. The sequence is that of Galactose mutarotase from Homo sapiens (Human).